The sequence spans 334 residues: MNMIKIEPYIPTDISIEEISTNRIRISAYPFESGYAITLAHPIRRLLLSSSVGYAPTALRIQGVTHEFDSIRGIVEDVSHFITNLKNIRFLIKDTESDNVQLHYEFKGPMVLSANELVNDMVGIVNPEAYLATINENASLSFSLIVQKGIGYVPSESIRGKISEDYIPLDAYFTPVKKAVYEIENVLVEDNPNYEKIVFDIETDGQIEPITAFKEAIAIMHKQMSIFGVDLSTASSGTRNISEDSGELKTLMIKIDTLNLSARCFNCLDRSGLKYVGELVIMSENELKNIKNMGKKSYDEIADKLEELGYPVGGEIADDILPLLNRKLAKLKSN.

The tract at residues 1-231 (MNMIKIEPYI…KQMSIFGVDL (231 aa)) is alpha N-terminal domain (alpha-NTD). The segment at 247 to 334 (ELKTLMIKID…NRKLAKLKSN (88 aa)) is alpha C-terminal domain (alpha-CTD).

It belongs to the RNA polymerase alpha chain family. Homodimer. The RNAP catalytic core consists of 2 alpha, 1 beta/beta' and 1 omega subunit. When a sigma factor is associated with the core the holoenzyme is formed, which can initiate transcription.

The catalysed reaction is RNA(n) + a ribonucleoside 5'-triphosphate = RNA(n+1) + diphosphate. Functionally, DNA-dependent RNA polymerase catalyzes the transcription of DNA into RNA using the four ribonucleoside triphosphates as substrates. This is DNA-directed RNA polymerase subunit alpha from Helicobacter hepaticus (strain ATCC 51449 / 3B1).